Here is a 163-residue protein sequence, read N- to C-terminus: uncharacterized protein (163 aa).

This is an uncharacterized protein from Drosophila melanogaster (Fruit fly).